Here is a 130-residue protein sequence, read N- to C-terminus: Small ribosomal subunit protein uS8 (130 aa).

Belongs to the universal ribosomal protein uS8 family. Part of the 30S ribosomal subunit.

One of the primary rRNA binding proteins, it binds directly to 16S rRNA central domain where it helps coordinate assembly of the platform of the 30S subunit. This is Small ribosomal subunit protein uS8 from Pyrobaculum calidifontis (strain DSM 21063 / JCM 11548 / VA1).